A 281-amino-acid polypeptide reads, in one-letter code: 40S small subunit processome assembly factor 1 (281 aa).

A disordered region spans residues 29–141; the sequence is LGETEGETEQ…DEDEPAKNKT (113 aa). Residues Ser67 and Ser75 each carry the phosphoserine modification. Position 172 is an N6-acetyllysine (Lys172). The tract at residues 221–254 is disordered; it reads ETDIFKKKKKKGRGQEDRRSKKSAPSILSSGQVG. At Ser267 the chain carries Phosphoserine.

Part of the small subunit (SSU) processome, composed of more than 70 proteins and the RNA chaperone small nucleolar RNA (snoRNA) U3.

It localises to the chromosome. Its subcellular location is the nucleus. It is found in the nucleolus. Its function is as follows. Part of the small subunit (SSU) processome, first precursor of the small eukaryotic ribosomal subunit. During the assembly of the SSU processome in the nucleolus, many ribosome biogenesis factors, an RNA chaperone and ribosomal proteins associate with the nascent pre-rRNA and work in concert to generate RNA folding, modifications, rearrangements and cleavage as well as targeted degradation of pre-ribosomal RNA by the RNA exosome. Prevents helicase DHX37 to be recruited before post-A1 state. This is 40S small subunit processome assembly factor 1 from Mus musculus (Mouse).